A 684-amino-acid chain; its full sequence is UvrABC system protein B (684 aa).

A Helicase ATP-binding domain is found at 30–188; that stretch reads EGVQRGDRWQ…QELVSLHYVR (159 aa). 43–50 contributes to the ATP binding site; sequence GVTGSGKT. The Beta-hairpin signature appears at 96–119; it reads YYDFYQPEAYLPALDKYIAKDLRI. Residues 435-601 form the Helicase C-terminal domain; it reads QIDDLLGEIR…SIIKSVEQVL (167 aa). The UVR domain maps to 641 to 676; that stretch reads YSMAESLRLEMQEAALKMEYEKAAYLRDEITKFEHR.

The protein belongs to the UvrB family. Forms a heterotetramer with UvrA during the search for lesions. Interacts with UvrC in an incision complex.

It localises to the cytoplasm. Functionally, the UvrABC repair system catalyzes the recognition and processing of DNA lesions. A damage recognition complex composed of 2 UvrA and 2 UvrB subunits scans DNA for abnormalities. Upon binding of the UvrA(2)B(2) complex to a putative damaged site, the DNA wraps around one UvrB monomer. DNA wrap is dependent on ATP binding by UvrB and probably causes local melting of the DNA helix, facilitating insertion of UvrB beta-hairpin between the DNA strands. Then UvrB probes one DNA strand for the presence of a lesion. If a lesion is found the UvrA subunits dissociate and the UvrB-DNA preincision complex is formed. This complex is subsequently bound by UvrC and the second UvrB is released. If no lesion is found, the DNA wraps around the other UvrB subunit that will check the other stand for damage. This chain is UvrABC system protein B, found in Chlorobium limicola (strain DSM 245 / NBRC 103803 / 6330).